A 159-amino-acid polypeptide reads, in one-letter code: Nudix hydrolase DR_1025 (159 aa).

3 residues coordinate Mg(2+): methionine 1, arginine 14, and serine 49. An ATP-binding site is contributed by 1–6; the sequence is MEHDER. The Nudix hydrolase domain maps to 11 to 144; it reads VELRAAGVVL…QIRMYQTKLF (134 aa). 50–51 contributes to the ATP binding site; it reads GA. A Nudix box motif is present at residues 50-71; it reads GAVEDGENPQDAAVREACEETG. 2 residues coordinate Mg(2+): glutamate 53 and glutamate 65. Position 87-89 (87-89) interacts with ATP; it reads FPD. Position 95 (arginine 95) interacts with Mg(2+).

It belongs to the Nudix hydrolase family. In terms of assembly, homodimer. Mg(2+) is required as a cofactor.

It carries out the reaction 8-oxo-dGTP + H2O = 8-oxo-dGDP + phosphate + H(+). It catalyses the reaction 8-oxo-GTP + H2O = 8-oxo-GDP + phosphate + H(+). The enzyme catalyses P(1),P(4)-bis(5'-adenosyl) tetraphosphate + H2O = AMP + ATP + 2 H(+). Its function is as follows. Hydrolase that can act as a nucleoside triphosphatase and a dinucleoside polyphosphate pyrophosphatase. The best substrates are 8-oxo-dGTP and 8-oxo-GTP. Other substrates include Ap4A, dGTP and GTP. May be involved in protection from damage caused by radiation. This is Nudix hydrolase DR_1025 from Deinococcus radiodurans (strain ATCC 13939 / DSM 20539 / JCM 16871 / CCUG 27074 / LMG 4051 / NBRC 15346 / NCIMB 9279 / VKM B-1422 / R1).